The chain runs to 310 residues: Ribosomal RNA small subunit methyltransferase H (310 aa).

Residues 35-37 (GGH), Asp-52, Phe-79, Asp-100, and Gln-107 each bind S-adenosyl-L-methionine.

This sequence belongs to the methyltransferase superfamily. RsmH family.

The protein localises to the cytoplasm. It catalyses the reaction cytidine(1402) in 16S rRNA + S-adenosyl-L-methionine = N(4)-methylcytidine(1402) in 16S rRNA + S-adenosyl-L-homocysteine + H(+). In terms of biological role, specifically methylates the N4 position of cytidine in position 1402 (C1402) of 16S rRNA. The chain is Ribosomal RNA small subunit methyltransferase H from Anaeromyxobacter sp. (strain Fw109-5).